The chain runs to 78 residues: Nucleocapsid VP1 (78 aa).

As to quaternary structure, homodimer.

The protein localises to the virion. In terms of biological role, completely wraps the viral circular dsDNA genome to form a nucleoprotein filament. These interactions between the viral genome and the nucleocapsid proteins probably maintain the DNA in A-form. This certainly protects the viral DNA under conditions such as the extreme desiccation of its host. This chain is Nucleocapsid VP1, found in Sulfolobus (SPV1).